An 856-amino-acid chain; its full sequence is Bifunctional uridylyltransferase/uridylyl-removing enzyme (856 aa).

Positions 1–320 are uridylyltransferase; the sequence is MTLSAAPLQH…YCQVPRVTQH (320 aa). The tract at residues 321-678 is uridylyl-removing; it reads ISEYFHAVNG…ARLADDHEGL (358 aa). The region spanning 439 to 561 is the HD domain; that stretch reads VDEHILMVVR…VRTPRRLAAL (123 aa). ACT domains are found at residues 679 to 760 and 788 to 856; these read QVLI…LPPQ and ILSI…ALRI.

It belongs to the GlnD family. Mg(2+) serves as cofactor.

It carries out the reaction [protein-PII]-L-tyrosine + UTP = [protein-PII]-uridylyl-L-tyrosine + diphosphate. The catalysed reaction is [protein-PII]-uridylyl-L-tyrosine + H2O = [protein-PII]-L-tyrosine + UMP + H(+). Its activity is regulated as follows. Uridylyltransferase (UTase) activity is inhibited by glutamine, while glutamine activates uridylyl-removing (UR) activity. Functionally, modifies, by uridylylation and deuridylylation, the PII regulatory proteins (GlnB and homologs), in response to the nitrogen status of the cell that GlnD senses through the glutamine level. Under low glutamine levels, catalyzes the conversion of the PII proteins and UTP to PII-UMP and PPi, while under higher glutamine levels, GlnD hydrolyzes PII-UMP to PII and UMP (deuridylylation). Thus, controls uridylylation state and activity of the PII proteins, and plays an important role in the regulation of nitrogen assimilation and metabolism. The chain is Bifunctional uridylyltransferase/uridylyl-removing enzyme from Chromobacterium violaceum (strain ATCC 12472 / DSM 30191 / JCM 1249 / CCUG 213 / NBRC 12614 / NCIMB 9131 / NCTC 9757 / MK).